The primary structure comprises 286 residues: Acyl-CoA-binding domain-containing protein 6 (286 aa).

The ACB domain maps to 32 to 117 (LQCQFEQAAK…VKKLDPDWSP (86 aa)). Residues 59 to 63 (YARYK), Lys-85, and Tyr-104 each bind an acyl-CoA. ANK repeat units follow at residues 182–211 (EGRSLLHWACDRGHTQLVSVILFHNAHINM) and 215–244 (EGQTPLHYASACEFPDIVDLLLDHGADPSL).

Its subcellular location is the cytoplasm. The protein resides in the nucleus. Binds long-chain acyl-coenzyme A molecules with a strong preference for unsaturated C18:1-CoA. Does not bind fatty acids. Plays a role in protein N-myristoylation. The polypeptide is Acyl-CoA-binding domain-containing protein 6 (acbd6) (Xenopus laevis (African clawed frog)).